We begin with the raw amino-acid sequence, 725 residues long: Sodium/hydrogen exchanger 7 (725 aa).

The segment at 1–20 (MEPGDAARPGSGRATGAPPP) is disordered. The Cytoplasmic portion of the chain corresponds to 1-21 (MEPGDAARPGSGRATGAPPPR). Residues 22 to 42 (LLLLPLLLGWGLRVAAAASAS) form a helical membrane-spanning segment. The Lumenal portion of the chain corresponds to 43–70 (SSGAAAEDSSAMEELATEKEAEESHRQD). A helical transmembrane segment spans residues 71–91 (SVSLLTFILLLTLTILTIWLF). The Cytoplasmic segment spans residues 92-95 (KHRR). The chain crosses the membrane as a helical span at residues 96-116 (VRFLHETGLAMIYGLIVGVIL). The Lumenal segment spans residues 117–175 (RYGTPATSGRDKSLSCTQEDRAFSTLLVNVSGKFFEYTLKGEISPGKINSVEQNDMLRK). Asn145 carries an N-linked (GlcNAc...) asparagine glycan. Residues 176-196 (VTFDPEVFFNILLPPIIFHAG) form a helical membrane-spanning segment. The Cytoplasmic segment spans residues 197–210 (YSLKKRHFFRNLGS). A helical transmembrane segment spans residues 211–231 (ILAYAFLGTAVSCFIIGNLMY). Over 232–251 (GVVKLMKIMGQLSDKFYYTD) the chain is Lumenal. The chain crosses the membrane as a helical span at residues 252–272 (CLFFGAIISATDPVTVLAIFN). Residues 273-277 (ELHAD) lie on the Cytoplasmic side of the membrane. Residues 278–298 (VDLYALLFGESVLNDAVAIVL) form a helical membrane-spanning segment. The Lumenal segment spans residues 299–322 (SSSIVAYQPAGLNTHAFDAAAFFK). The chain crosses the membrane as a helical span at residues 323-343 (SVGIFLGIFSGSFTMGAVTGV). At 344 to 349 (NANVTK) the chain is on the cytoplasmic side. The next 2 membrane-spanning stretches (helical) occupy residues 350–370 (FTKL…MSWS) and 371–391 (TFLL…FCGI). The Cytoplasmic portion of the chain corresponds to 392-414 (TQAHYTYNNLSVESRSRTKQLFE). The helical transmembrane segment at 415 to 435 (VLHFLAENFIFSYMGLALFTF) threads the bilayer. Residues 436–442 (QKHVFSP) are Lumenal-facing. A helical membrane pass occupies residues 443–463 (IFIIGAFVAIFLGRAAHIYPL). The Cytoplasmic segment spans residues 464 to 474 (SFFLNLGRRHK). The helical transmembrane segment at 475 to 497 (IGWNFQHMMMFSGLRGAMAFALA) threads the bilayer. Over 498–513 (IRDTASYARQMMFTTT) the chain is Lumenal. The helical transmembrane segment at 514-534 (LLIVFFTVWIIGGGTTPMLSW) threads the bilayer. Required for trans-Golgi network localization regions lie at residues 533-559 (SWLN…YFRV) and 563-568 (PDQDPP). Topologically, residues 535–725 (LNIRVGVEEP…RLVFPLEDNA (191 aa)) are cytoplasmic. Residue Ser545 is modified to Phosphoserine. Disordered regions lie at residues 567–590 (PPPN…GNRT) and 669–714 (TVTA…SSRG). Residues 675 to 684 (SSSSHTASTS) show a composition bias toward low complexity. The span at 687–704 (GSRRTKSSSEEVLERDLG) shows a compositional bias: basic and acidic residues.

It belongs to the monovalent cation:proton antiporter 1 (CPA1) transporter (TC 2.A.36) family. In terms of assembly, interacts with SCAMP1, SCAMP2 and SCAMP5; may participate in its shuttling from trans-Golgi network to recycling endosomes. Post-translationally, N-glycosylated. Ubiquitously expressed.

It is found in the golgi apparatus. It localises to the trans-Golgi network membrane. The protein resides in the recycling endosome membrane. The protein localises to the cell membrane. It carries out the reaction Na(+)(in) + H(+)(out) = Na(+)(out) + H(+)(in). It catalyses the reaction K(+)(in) + H(+)(out) = K(+)(out) + H(+)(in). Its activity is regulated as follows. Inhibited by benzamil and quinine but not by amiloride. Functionally, golgi Na(+), K(+)/(H+) antiporter. Mediates the electoneutral influx of Na(+) or K(+) in exchange for H(+). May contribute to the regulation of Golgi apparatus volume and pH. The chain is Sodium/hydrogen exchanger 7 (SLC9A7) from Homo sapiens (Human).